Here is a 151-residue protein sequence, read N- to C-terminus: Small ribosomal subunit protein uS15 (151 aa).

This sequence belongs to the universal ribosomal protein uS15 family. Component of the small ribosomal subunit.

The protein resides in the cytoplasm. Its function is as follows. Component of the small ribosomal subunit. The ribosome is a large ribonucleoprotein complex responsible for the synthesis of proteins in the cell. This chain is Small ribosomal subunit protein uS15 (rps13), found in Gillichthys mirabilis (Long-jawed mudsucker).